The chain runs to 312 residues: MDSVIAFDRSPMFRVYKSGRIERLLGETTVPPSLTPQNGVVSKDIIHSPEKNLSLRIYLPEKVTVKKLPILIYFHGGGFIIETAFSPPYHTFLTSAVAAANCLAISVNYRRAPEFPVPIPYEDSWDSLKWVLTHITGTGPETWINKHGDFGKVFLAGDSAGGNISHHLTMRAKKEKLCDSLISGIILIHPYFWSKTPIDEFEVRDVGKTKGVEGSWRVASPNSKQGVDDPWLNVVGSDPSGLGCGRVLVMVAGDDLFVRQGWCYAEKLKKSGWEGEVEVMETKNEGHVFHLKNPNSDNARQVVKKLEEFINK.

At methionine 1 the chain carries N-acetylmethionine. An Involved in the stabilization of the negatively charged intermediate by the formation of the oxyanion hole motif is present at residues 75-77; the sequence is HGG. Catalysis depends on residues serine 159, aspartate 255, and histidine 287.

Belongs to the 'GDXG' lipolytic enzyme family. In terms of tissue distribution, expressed in leaves, stems, flowers and siliques.

The enzyme catalyses a carboxylic ester + H2O = an alcohol + a carboxylate + H(+). Its function is as follows. Carboxylesterase acting on esters with varying acyl chain length. This chain is Probable carboxylesterase 7 (CXE7), found in Arabidopsis thaliana (Mouse-ear cress).